Reading from the N-terminus, the 24-residue chain is FVVFILADPARYFQFYFPXFFQHR.

May mediate relaxation of depolarized colon tonus. It binds iodocyanopindolol and SM-11044. The polypeptide is SM-11044-binding protein (Rattus norvegicus (Rat)).